Consider the following 572-residue polypeptide: Proline--tRNA ligase (572 aa).

It belongs to the class-II aminoacyl-tRNA synthetase family. ProS type 1 subfamily. In terms of assembly, homodimer.

Its subcellular location is the cytoplasm. The catalysed reaction is tRNA(Pro) + L-proline + ATP = L-prolyl-tRNA(Pro) + AMP + diphosphate. Its function is as follows. Catalyzes the attachment of proline to tRNA(Pro) in a two-step reaction: proline is first activated by ATP to form Pro-AMP and then transferred to the acceptor end of tRNA(Pro). As ProRS can inadvertently accommodate and process non-cognate amino acids such as alanine and cysteine, to avoid such errors it has two additional distinct editing activities against alanine. One activity is designated as 'pretransfer' editing and involves the tRNA(Pro)-independent hydrolysis of activated Ala-AMP. The other activity is designated 'posttransfer' editing and involves deacylation of mischarged Ala-tRNA(Pro). The misacylated Cys-tRNA(Pro) is not edited by ProRS. The polypeptide is Proline--tRNA ligase (Yersinia enterocolitica serotype O:8 / biotype 1B (strain NCTC 13174 / 8081)).